We begin with the raw amino-acid sequence, 308 residues long: Acyl transferase (308 aa).

Active-site charge relay system residues include Ser116, Asp213, and His243.

The protein belongs to the LuxD family.

It participates in lipid metabolism; fatty acid reduction for biolumincescence. Functionally, acyl transferase is part of the fatty acid reductase system required for aldehyde biosynthesis; it produces fatty acids for the luminescent reaction. This chain is Acyl transferase, found in Shewanella hanedai (Alteromonas hanedai).